The primary structure comprises 823 residues: Protein FAM193B (823 aa).

4 disordered regions span residues 1 to 78 (MTRR…TSQS), 158 to 191 (SCKS…NSGD), 209 to 281 (SPHS…PTTP), and 381 to 409 (CEAD…HQRD). Over residues 26 to 36 (PQAPEPPPPPS) the composition is skewed to pro residues. The span at 52-64 (PYRDDPREEDEPK) shows a compositional bias: basic and acidic residues. Composition is skewed to low complexity over residues 168-184 (SHSS…SSSS) and 263-281 (SHPG…PTTP). Positions 382-393 (EADEGLGEEEDS) are enriched in acidic residues. Residues 422 to 484 (GHNAEKEKAQ…RLQEIKNTVK (63 aa)) are a coiled coil. 2 disordered regions span residues 503-583 (FSKE…PENG) and 599-775 (WVKT…PKDM). Composition is skewed to polar residues over residues 516 to 526 (LAPSNPSGSSE) and 641 to 657 (QGNQ…SQSP). Ser-694, Ser-706, and Ser-813 each carry phosphoserine.

Belongs to the FAM193 family.

The protein resides in the cytoplasm. Its subcellular location is the nucleus. This is Protein FAM193B (FAM193B) from Bos taurus (Bovine).